Here is a 159-residue protein sequence, read N- to C-terminus: Protein-export protein SecB (159 aa).

Belongs to the SecB family. As to quaternary structure, homotetramer, a dimer of dimers. One homotetramer interacts with 1 SecA dimer.

It is found in the cytoplasm. Functionally, one of the proteins required for the normal export of preproteins out of the cell cytoplasm. It is a molecular chaperone that binds to a subset of precursor proteins, maintaining them in a translocation-competent state. It also specifically binds to its receptor SecA. In Burkholderia vietnamiensis (strain G4 / LMG 22486) (Burkholderia cepacia (strain R1808)), this protein is Protein-export protein SecB.